The sequence spans 146 residues: uncharacterized protein (146 aa).

In terms of domain architecture, HTH marR-type spans 1–137; the sequence is MLSQEFFNSF…TINVMNQIHE (137 aa).

This is an uncharacterized protein from Staphylococcus aureus (strain N315).